The following is a 461-amino-acid chain: D-phenylhydantoinase (461 aa).

Residues histidine 59, histidine 61, and lysine 151 each contribute to the a divalent metal cation site. At lysine 151 the chain carries N6-carboxylysine. Tyrosine 156 provides a ligand contact to substrate. A divalent metal cation is bound by residues histidine 182 and histidine 239. Serine 286 is a substrate binding site. Aspartate 313 provides a ligand contact to a divalent metal cation. Residue asparagine 335 coordinates substrate.

This sequence belongs to the metallo-dependent hydrolases superfamily. Hydantoinase/dihydropyrimidinase family. As to quaternary structure, homotetramer. A divalent metal cation is required as a cofactor. In terms of processing, carboxylation allows a single lysine to coordinate two divalent metal cations.

It carries out the reaction D-5-phenylhydantoin + H2O = N-carbamoyl-D-phenylglycine + H(+). Its function is as follows. Catalyzes the stereospecific hydrolysis of the cyclic amide bond of D-hydantoin derivatives with an aromatic side chains at the 5'-position. Has no activity on dihydropyrimidines. The physiological function is unknown. This is D-phenylhydantoinase from Escherichia coli O17:K52:H18 (strain UMN026 / ExPEC).